A 103-amino-acid chain; its full sequence is Co-chaperonin GroES (103 aa).

The protein belongs to the GroES chaperonin family. Heptamer of 7 subunits arranged in a ring. Interacts with the chaperonin GroEL.

Its subcellular location is the cytoplasm. In terms of biological role, together with the chaperonin GroEL, plays an essential role in assisting protein folding. The GroEL-GroES system forms a nano-cage that allows encapsulation of the non-native substrate proteins and provides a physical environment optimized to promote and accelerate protein folding. GroES binds to the apical surface of the GroEL ring, thereby capping the opening of the GroEL channel. The protein is Co-chaperonin GroES of Prochlorococcus marinus (strain MIT 9312).